Here is a 238-residue protein sequence, read N- to C-terminus: C-type lectin domain family 4 member A (238 aa).

The Cytoplasmic segment spans residues 1–48; that stretch reads MASEITYAEVKFKNESNSLHTYSESPAAPREKPIRDLRKPGSPSLLLT. The short motif at 5 to 10 is the ITIM motif element; that stretch reads ITYAEV. Residues 49–69 traverse the membrane as a helical; Signal-anchor for type II membrane protein segment; it reads SLMLLLLLLAITFLVAFIIYF. Over 70–238 the chain is Extracellular; it reads QKYSQLLEEK…SVCQMKKINL (169 aa). A glycan (N-linked (GlcNAc...) asparagine) is linked at Asn91. Cys107 and Cys118 are oxidised to a cystine. One can recognise a C-type lectin domain in the interval 126–233; the sequence is SSASWNKSEE…SLKQKSVCQM (108 aa). N-linked (GlcNAc...) asparagine glycosylation is found at Asn131 and Asn136. 2 cysteine pairs are disulfide-bonded: Cys137–Cys231 and Cys205–Cys223. Val146, Glu152, Glu197, Ser199, and Glu203 together coordinate Ca(2+). Alpha-D-mannopyranose-binding positions include 197 to 199 and Glu203; that span reads EPS. 209–211 serves as a coordination point for N-acetyl-D-glucosamine; sequence IYR. Ca(2+) is bound by residues Asn219 and Asp220.

In terms of assembly, may interact with PTPN6 via its ITIM site. Expressed in splenic antigen-presenting cells including B-cells, monocytes/macrophages, and dendritic cells (at protein level). Expressed in spleen and lymph node and slightly increased with dendritic cell maturation.

It is found in the cell membrane. Functionally, may be involved in regulating immune reactivity. May play a role in modulating dendritic cells (DC) differentiation and/or maturation. May be involved in the inhibition of B-cell-receptor-mediated calcium mobilization and protein tyrosine phosphorylation. In terms of biological role, C-type lectin receptor that binds carbohydrates mannose and fucose but also weakly interacts with N-acetylglucosamine (GlcNAc) in a Ca(2+)-dependent manner. Involved in regulating immune reactivity. Once triggered by antigen, it is internalized by clathrin-dependent endocytosis and delivers its antigenic cargo into the antigen presentation pathway resulting in cross-priming of CD8(+) T cells. This cross-presentation and cross-priming are enhanced by TLR7 and TLR8 agonists with increased expansion of the CD8(+) T cells, high production of IFNG and TNF with reduced levels of IL4, IL5 and IL13. In plasmacytoid dendritic cells, inhibits TLR9-mediated IFNA and TNF production. May be involved via its ITIM motif (immunoreceptor tyrosine-based inhibitory motifs) in the inhibition of B-cell-receptor-mediated calcium mobilization and protein tyrosine phosphorylation. In Mus musculus (Mouse), this protein is C-type lectin domain family 4 member A (Clec4a).